The sequence spans 211 residues: Calaxin (211 aa).

3 consecutive EF-hand domains span residues 64 to 99 (TDDMIMDRVFRGFDKDNDGCVNVLEWIHGLSLFLRG), 100 to 135 (SLEEKMKYCFEVFDLNGDGFISKEEMFHMLKNSLLK), and 145 to 180 (GIKDLVEITLKKMDHDHDGKLSFADYELAVREETLL). Positions 77, 79, 81, 83, 88, 113, 115, 117, 124, 158, 160, 162, 164, and 169 each coordinate Ca(2+).

In terms of assembly, component of the outer dynein arm-docking complex along with ODAD1, ODAD2, ODAD3 and ODAD4. In terms of tissue distribution, strong expression in the respiratory epithelium. Expressed in the sperm.

It is found in the cytoplasm. The protein localises to the cytoskeleton. It localises to the cilium axoneme. Its subcellular location is the cell projection. The protein resides in the cilium. It is found in the flagellum. Functionally, component of the outer dynein arm-docking complex (ODA-DC) that mediates outer dynein arms (ODA) binding onto the doublet microtubule. Seems to regulate the assembly of both ODAs and their axonemal docking complex onto ciliary microtubules. Regulates ciliary and flagellar motility and is required for cilia-driven determination of body laterality. This is Calaxin from Homo sapiens (Human).